Reading from the N-terminus, the 561-residue chain is MCGIWALFGSDDCLSVQCLSAMKIAHRGPDAFRFENVNGYTNCCFGFHRLAVVDPLFGMQPIRVKKYPYLWLCYNGEIYNHKKMQQHFEFEYQTKVDGEIILHLYDKGGIEQTICMLDGVFAFVLLDTATKKVFLGRDTYGVRPLFKAMTEDGFLAVCSEAKGLVTLKHSTTPFLKVEPFLPGHYEVLDLKPNGKVASVEMVKYHHCRDEPLHALYDNVEKLFPGFEIETVKNNLRILFNNAVKKRLMTDRRIGCLLSGGLDSSLVAATLLKQLKEARVQYPLQTFAIGMEDSPDLLAARKVADHIGSEHYEVLFNSEEGIQALDEVIFSLETYDITTVRASVGMYLISKYIRKNTDSVVIFSGEGSDELTQGYIYFHKAPSPEKAEEESERLLRELYLFDVLRADRTTAAHGLELRVPFLDHRFSSYYLSLPPEMRIPKNGIEKHLLRETFEDSNLIPKEILWRPKEAFSDGITSVKNSWFKILQEYVEHQVDDAMMANAAQKFPFNTPKTKEGYYYRQVFERHYPGRADWLSHYWMPKWINATDPSARTLTHYKSAVKA.

Catalysis depends on cysteine 2, which acts as the For GATase activity. Residues 2-191 (CGIWALFGSD…PGHYEVLDLK (190 aa)) enclose the Glutamine amidotransferase type-2 domain. L-glutamine is bound by residues 49–53 (RLAVV), 75–77 (NGE), and aspartate 97. Residues 213 to 536 (HALYDNVEKL…PGRADWLSHY (324 aa)) enclose the Asparagine synthetase domain. Residues leucine 256, isoleucine 288, and 363 to 364 (SG) contribute to the ATP site. An N6-acetyllysine modification is found at lysine 385. At threonine 545 the chain carries Phosphothreonine. The residue at position 557 (serine 557) is a Phosphoserine.

It carries out the reaction L-aspartate + L-glutamine + ATP + H2O = L-asparagine + L-glutamate + AMP + diphosphate + H(+). The protein operates within amino-acid biosynthesis; L-asparagine biosynthesis; L-asparagine from L-aspartate (L-Gln route): step 1/1. The chain is Asparagine synthetase [glutamine-hydrolyzing] (ASNS) from Pongo abelii (Sumatran orangutan).